Consider the following 376-residue polypeptide: Erythronate-4-phosphate dehydrogenase (376 aa).

The substrate site is built by Ser-45 and Thr-67. Asp-147 contributes to the NAD(+) binding site. Residue Arg-209 is part of the active site. Asp-233 serves as a coordination point for NAD(+). The active site involves Glu-238. His-255 serves as the catalytic Proton donor. Gly-258 serves as a coordination point for NAD(+). Tyr-259 contacts substrate.

Belongs to the D-isomer specific 2-hydroxyacid dehydrogenase family. PdxB subfamily. Homodimer.

The protein localises to the cytoplasm. The catalysed reaction is 4-phospho-D-erythronate + NAD(+) = (R)-3-hydroxy-2-oxo-4-phosphooxybutanoate + NADH + H(+). The protein operates within cofactor biosynthesis; pyridoxine 5'-phosphate biosynthesis; pyridoxine 5'-phosphate from D-erythrose 4-phosphate: step 2/5. Catalyzes the oxidation of erythronate-4-phosphate to 3-hydroxy-2-oxo-4-phosphonooxybutanoate. This Shewanella sp. (strain MR-7) protein is Erythronate-4-phosphate dehydrogenase.